A 290-amino-acid chain; its full sequence is Pirin (290 aa).

Residues histidine 56, histidine 58, histidine 101, and glutamate 103 each contribute to the Fe cation site.

The protein belongs to the pirin family. May interact with NF1/CTF1. Interacts with BCL3. Identified in a complex comprised of PIR, BLC3, NFKB1 and target DNA. Fe cation is required as a cofactor. In terms of tissue distribution, highly expressed in a subset of melanomas. Detected at very low levels in most tissues (at protein level). Expressed in all tissues, with highest level of expression in heart and liver.

The protein resides in the nucleus. It is found in the cytoplasm. The catalysed reaction is quercetin + O2 = 2-(3,4-dihydroxybenzoyloxy)-4,6-dihydroxybenzoate + CO. Its pathway is flavonoid metabolism; quercetin degradation. Inhibited by kojic acid, sodium diethyldithiocarbamate and 1,10-phenanthroline monohydrochloride. Its function is as follows. Transcriptional coregulator of NF-kappa-B which facilitates binding of NF-kappa-B proteins to target kappa-B genes in a redox-state-dependent manner. May be required for efficient terminal myeloid maturation of hematopoietic cells. Has quercetin 2,3-dioxygenase activity (in vitro). The chain is Pirin (PIR) from Homo sapiens (Human).